The following is a 254-amino-acid chain: Urease accessory protein UreF (254 aa).

The span at 1 to 11 (MDKGKSVKSTE) shows a compositional bias: basic and acidic residues. The tract at residues 1–25 (MDKGKSVKSTEKSVGIPPKTPKTDN) is disordered.

The protein belongs to the UreF family. UreH, UreF and UreG form a complex that acts as a GTP-hydrolysis-dependent molecular chaperone, activating the urease apoprotein by helping to assemble the nickel containing metallocenter of UreC. The UreE protein probably delivers the nickel.

Its subcellular location is the cytoplasm. Required for maturation of urease via the functional incorporation of the urease nickel metallocenter. The protein is Urease accessory protein UreF of Helicobacter pylori (strain P12).